The following is an 80-amino-acid chain: Centromere protein X (80 aa).

This sequence belongs to the CENP-X/MHF2 family. As to quaternary structure, heterodimer with CENPX, sometimes called MHF; this interaction stabilizes both partners. MHF heterodimers can assemble to form tetrameric structures. MHF also coassemble with CENPT-CENPW heterodimers at centromeres to form the tetrameric CENP-T-W-S-X complex. Forms a discrete complex with FANCM and CENPX, called FANCM-MHF; this interaction, probably mediated by direct binding between CENPS and FANCM, leads to synergistic activation of double-stranded DNA binding and strongly stimulates FANCM-mediated DNA remodeling. Recruited by FANCM to the Fanconi anemia (FA) core complex, which consists of CENPS, CENPX, FANCA, FANCB, FANCC, FANCE, FANCF, FANCG, FANCL, FANCM, FAAP24 and FAAP100. The FA core complex associates with Bloom syndrome (BLM) complex, which consists of at least BLM, DNA topoisomerase 3-alpha (TOP3A), RMI1/BLAP75, RPA1/RPA70 and RPA2/RPA32. The super complex between FA and BLM is called BRAFT.

The protein localises to the nucleus. The protein resides in the chromosome. Its subcellular location is the centromere. It localises to the kinetochore. DNA-binding component of the Fanconi anemia (FA) core complex. Required for the normal activation of the FA pathway, leading to monoubiquitination of the FANCI-FANCD2 complex in response to DNA damage, cellular resistance to DNA cross-linking drugs, and prevention of chromosomal breakage. In complex with CENPS (MHF heterodimer), crucial cofactor for FANCM in both binding and ATP-dependent remodeling of DNA. Stabilizes FANCM. In complex with CENPS and FANCM (but not other FANC proteins), rapidly recruited to blocked forks and promotes gene conversion at blocked replication forks. In complex with CENPS, CENPT and CENPW (CENP-T-W-S-X heterotetramer), involved in the formation of a functional kinetochore outer plate, which is essential for kinetochore-microtubule attachment and faithful mitotic progression. As a component of MHF and CENP-T-W-S-X complexes, binds DNA and bends it to form a nucleosome-like structure. DNA-binding function is fulfilled in the presence of CENPS, with the following preference for DNA substates: Holliday junction &gt; double-stranded &gt; splay arm &gt; single-stranded. Does not bind DNA on its own. This Gallus gallus (Chicken) protein is Centromere protein X (CENPX).